The sequence spans 554 residues: CTP synthase (554 aa).

The segment at Met1–Leu265 is amidoligase domain. Ser13 provides a ligand contact to CTP. Ser13 is a binding site for UTP. Residues Ser14–Ile19 and Asp71 each bind ATP. Asp71 and Glu139 together coordinate Mg(2+). CTP is bound by residues Asp146–Glu148, Lys186–Gln191, and Lys222. Residues Lys186–Gln191 and Lys222 contribute to the UTP site. Positions Thr292–Gly545 constitute a Glutamine amidotransferase type-1 domain. Position 353 (Gly353) interacts with L-glutamine. The active-site Nucleophile; for glutamine hydrolysis is the Cys380. L-glutamine-binding positions include Tyr381–Gln384, Glu404, and Arg471. Active-site residues include His518 and Glu520.

Belongs to the CTP synthase family. In terms of assembly, homotetramer.

It carries out the reaction UTP + L-glutamine + ATP + H2O = CTP + L-glutamate + ADP + phosphate + 2 H(+). It catalyses the reaction L-glutamine + H2O = L-glutamate + NH4(+). The enzyme catalyses UTP + NH4(+) + ATP = CTP + ADP + phosphate + 2 H(+). The protein operates within pyrimidine metabolism; CTP biosynthesis via de novo pathway; CTP from UDP: step 2/2. Its activity is regulated as follows. Allosterically activated by GTP, when glutamine is the substrate; GTP has no effect on the reaction when ammonia is the substrate. The allosteric effector GTP functions by stabilizing the protein conformation that binds the tetrahedral intermediate(s) formed during glutamine hydrolysis. Inhibited by the product CTP, via allosteric rather than competitive inhibition. Its function is as follows. Catalyzes the ATP-dependent amination of UTP to CTP with either L-glutamine or ammonia as the source of nitrogen. Regulates intracellular CTP levels through interactions with the four ribonucleotide triphosphates. This chain is CTP synthase, found in Xylella fastidiosa (strain 9a5c).